Here is a 283-residue protein sequence, read N- to C-terminus: Elongation factor Ts (283 aa).

The tract at residues threonine 84–valine 87 is involved in Mg(2+) ion dislocation from EF-Tu.

This sequence belongs to the EF-Ts family.

Its subcellular location is the cytoplasm. Its function is as follows. Associates with the EF-Tu.GDP complex and induces the exchange of GDP to GTP. It remains bound to the aminoacyl-tRNA.EF-Tu.GTP complex up to the GTP hydrolysis stage on the ribosome. The sequence is that of Elongation factor Ts from Bifidobacterium longum subsp. infantis (strain ATCC 15697 / DSM 20088 / JCM 1222 / NCTC 11817 / S12).